The primary structure comprises 478 residues: Pathogenicity cluster 5 protein d (478 aa).

The first 19 residues, 1–19 (MQIQNLIAALAGMAVVAEA), serve as a signal peptide directing secretion. 2 disordered regions span residues 35–89 (RQNK…GQAN) and 299–400 (NGGK…GGKG). The segment covering 38–64 (KGGNNNNNNNNNNNNNNNNNKNNGGNN) has biased composition (low complexity). Over residues 65–89 (QLCLNPNNVQKGSQQAGTPKQGQAN) the composition is skewed to polar residues. Gly residues predominate over residues 316 to 326 (NNDGGGGGNDG). 2 stretches are compositionally biased toward low complexity: residues 327 to 348 (GNNS…QNGA) and 379 to 393 (TQAG…TNGN). N-linked (GlcNAc...) asparagine glycosylation is found at N328 and N332.

It is found in the secreted. Secreted protein required for appressorial penetration of intact host epidermal cells and for pathogenicit, but not for subsequent biotrophic and necrotrophic colonization of leaves. This Colletotrichum graminicola (strain M1.001 / M2 / FGSC 10212) (Maize anthracnose fungus) protein is Pathogenicity cluster 5 protein d.